The primary structure comprises 203 residues: 2-hydroxychromene-2-carboxylate isomerase (203 aa).

Catalysis depends on Ser11, which acts as the Nucleophile. Residue Ser11 coordinates glutathione. Residues Lys43, 53 to 54 (NR), and Tyr84 contribute to the substrate site. Residues Val168 and 179-182 (WGND) each bind glutathione.

It belongs to the GST superfamily. NadH family. Requires glutathione as cofactor.

The enzyme catalyses 2-hydroxychromene-2-carboxylate = (3E)-4-(2-hydroxyphenyl)-2-oxobut-3-enoate. The protein operates within aromatic compound metabolism; naphthalene degradation. Its function is as follows. Involved in the naphthalene catabolic pathway. Catalyzes the reversible glutathione-dependent isomerization of 2-hydroxychromene-2-carboxylate (HCCA) to trans-O-hydroxybenzylidenepyruvate (THBPA). In Pseudomonas putida (Arthrobacter siderocapsulatus), this protein is 2-hydroxychromene-2-carboxylate isomerase (nahD).